A 118-amino-acid chain; its full sequence is Large ribosomal subunit protein bL20 (118 aa).

It belongs to the bacterial ribosomal protein bL20 family.

Functionally, binds directly to 23S ribosomal RNA and is necessary for the in vitro assembly process of the 50S ribosomal subunit. It is not involved in the protein synthesizing functions of that subunit. This Staphylococcus carnosus (strain TM300) protein is Large ribosomal subunit protein bL20.